Here is a 379-residue protein sequence, read N- to C-terminus: GPN-loop GTPase QQT2 (379 aa).

Met1 is subject to N-acetylmethionine. 51 to 56 lines the GTP pocket; sequence GSGKTS. Positions 108-110 match the Gly-Pro-Asn (GPN)-loop; involved in dimer interface motif; that stretch reads GPN. GTP is bound by residues 211–214 and Ala267; that span reads NKTD. Residues 288–322 are a coiled coil; it reads METYKADLDMRKADKERLEEERKKHEMEKLRKDME. Composition is skewed to basic and acidic residues over residues 303–322 and 335–346; these read ERLE…KDME and LKDRDATEKMML. A disordered region spans residues 303–379; that stretch reads ERLEEERKKH…EDDETKHYYL (77 aa). Acidic residues predominate over residues 347 to 372; that stretch reads EEDDEDFQVEDEEDSDDAIDEDDEDD.

It belongs to the GPN-loop GTPase family. In terms of assembly, heterodimer with QQT1. As to expression, expressed in individual cells of roots, leaves and flowers.

Its subcellular location is the cytoplasm. The protein resides in the nucleus. It localises to the cytoskeleton. It is found in the spindle. The protein localises to the phragmoplast. Small GTPase that is essential for the correct formation of the tangential divisions in early embryos. Associates with microtubule during mitosis and may function in the positioning of the division plane. May participate in the patterning of the early embryo at the octant-dermatogen transition. In Arabidopsis thaliana (Mouse-ear cress), this protein is GPN-loop GTPase QQT2.